The sequence spans 132 residues: Fatty acid-binding protein, intestinal (132 aa).

A2 carries the N-acetylalanine modification. Hexadecanoate contacts are provided by W83 and R107. Positions 83 and 107 each coordinate tetradecanoate.

Belongs to the calycin superfamily. Fatty-acid binding protein (FABP) family.

The protein localises to the cytoplasm. Functionally, FABPs are thought to play a role in the intracellular transport of long-chain fatty acids and their acyl-CoA esters. FABP2 is probably involved in triglyceride-rich lipoprotein synthesis. Binds saturated long-chain fatty acids with a high affinity, but binds with a lower affinity to unsaturated long-chain fatty acids. FABP2 may also help maintain energy homeostasis by functioning as a lipid sensor. This Bos taurus (Bovine) protein is Fatty acid-binding protein, intestinal (FABP2).